The following is a 657-amino-acid chain: Glycogen debranching enzyme (657 aa).

Catalysis depends on D336, which acts as the Nucleophile. E371 serves as the catalytic Proton donor. The tract at residues 460–479 (ANGEENRDGTNNNYSNNHGK) is disordered.

This sequence belongs to the glycosyl hydrolase 13 family.

The enzyme catalyses Hydrolysis of (1-&gt;6)-alpha-D-glucosidic linkages to branches with degrees of polymerization of three or four glucose residues in limit dextrin.. It participates in glycan degradation; glycogen degradation. In terms of biological role, removes maltotriose and maltotetraose chains that are attached by 1,6-alpha-linkage to the limit dextrin main chain, generating a debranched limit dextrin. The sequence is that of Glycogen debranching enzyme from Escherichia coli O81 (strain ED1a).